A 1389-amino-acid polypeptide reads, in one-letter code: DNA-directed RNA polymerase subunit beta' (1389 aa).

Zn(2+) is bound by residues cysteine 73, cysteine 75, cysteine 88, and cysteine 91. The Mg(2+) site is built by aspartate 464, aspartate 466, and aspartate 468. Zn(2+) is bound by residues cysteine 810, cysteine 884, cysteine 891, and cysteine 894.

Belongs to the RNA polymerase beta' chain family. The RNAP catalytic core consists of 2 alpha, 1 beta, 1 beta' and 1 omega subunit. When a sigma factor is associated with the core the holoenzyme is formed, which can initiate transcription. Mg(2+) is required as a cofactor. Requires Zn(2+) as cofactor.

The enzyme catalyses RNA(n) + a ribonucleoside 5'-triphosphate = RNA(n+1) + diphosphate. In terms of biological role, DNA-dependent RNA polymerase catalyzes the transcription of DNA into RNA using the four ribonucleoside triphosphates as substrates. The polypeptide is DNA-directed RNA polymerase subunit beta' (Pelagibacter ubique (strain HTCC1062)).